A 779-amino-acid polypeptide reads, in one-letter code: Endoribonuclease YSH1 (779 aa).

Residues His68, His70, Asp72, His73, His163, and Asp184 each coordinate Zn(2+). His408 functions as the Proton donor in the catalytic mechanism. His430 lines the Zn(2+) pocket. Residue Ser517 is modified to Phosphoserine; by ATM or ATR.

It belongs to the metallo-beta-lactamase superfamily. RNA-metabolizing metallo-beta-lactamase-like family. CPSF2/YSH1 subfamily. As to quaternary structure, component of the cleavage and polyadenylation factor (CPF) complex, which is composed of at least PTI1, SYC1, SSU72, GLC7, MPE1, REF2, PFS2, PTA1, YSH1/BRR5, SWD2, CFT2/YDH1, YTH1, CFT1/YHH1, FIP1 and PAP1. Interacts with FIP1, PFS2, RNA14 and YTH1. Requires Zn(2+) as cofactor.

It is found in the nucleus. In terms of biological role, component of the cleavage and polyadenylation factor (CPF) complex, which plays a key role in polyadenylation-dependent pre-mRNA 3'-end formation and cooperates with cleavage factors including the CFIA complex and NAB4/CFIB. Has endonuclease activity. The sequence is that of Endoribonuclease YSH1 (YSH1) from Saccharomyces cerevisiae (strain ATCC 204508 / S288c) (Baker's yeast).